Reading from the N-terminus, the 290-residue chain is Inositol-1-monophosphatase (290 aa).

The Mg(2+) site is built by glutamate 83, aspartate 104, isoleucine 106, and aspartate 107. Glutamate 83 is a substrate binding site. Substrate-binding positions include 106–109, arginine 206, and aspartate 235; that span reads IDGT. Position 235 (aspartate 235) interacts with Mg(2+).

Belongs to the inositol monophosphatase superfamily. The cofactor is Mg(2+).

It catalyses the reaction a myo-inositol phosphate + H2O = myo-inositol + phosphate. This is Inositol-1-monophosphatase (suhB) from Mycobacterium bovis (strain ATCC BAA-935 / AF2122/97).